Here is a 200-residue protein sequence, read N- to C-terminus: Glycerol-3-phosphate acyltransferase (200 aa).

4 helical membrane passes run Ala-4 to Gly-24, Ala-70 to Ile-90, Leu-110 to Leu-130, and Gln-158 to Arg-178.

This sequence belongs to the PlsY family. In terms of assembly, probably interacts with PlsX.

It localises to the cell inner membrane. It carries out the reaction an acyl phosphate + sn-glycerol 3-phosphate = a 1-acyl-sn-glycero-3-phosphate + phosphate. It participates in lipid metabolism; phospholipid metabolism. Its function is as follows. Catalyzes the transfer of an acyl group from acyl-phosphate (acyl-PO(4)) to glycerol-3-phosphate (G3P) to form lysophosphatidic acid (LPA). This enzyme utilizes acyl-phosphate as fatty acyl donor, but not acyl-CoA or acyl-ACP. The polypeptide is Glycerol-3-phosphate acyltransferase (Synechococcus sp. (strain JA-2-3B'a(2-13)) (Cyanobacteria bacterium Yellowstone B-Prime)).